Reading from the N-terminus, the 338-residue chain is MSSAVVPADDILEPTLQNILDQKSLRWIFVGGKGGVGKTTTSCSLAIQLAKVRKSVLLISTDPAHNLSDAFGQKFGKEARLIDGFDNLSAMEIDPSASMQDLMAAGGDQAEDMGFGLGGMMQDLAFSIPGVDEAMSFAEVLKQVKSLSYEVIVFDTAPTGHTLRFLQFPTVLEKGLAKLSQLSSQFGPMLNSVLGARGGLPGGQNLDDVLSKMESLRETISEVNTQFKNADLTTFVCVCIAEFLSLYETERMIQELTSYHIDTHAIVVNQLLFPGKDSTCDQCKARRKMQKKYLNEIEELYEDFNVVRMPLLVEEVRGKEKLERFSDMLVHPYQPPQE.

33–40 (KGGVGKTT) serves as a coordination point for ATP. D62 is an active-site residue. ATP is bound by residues E242 and N269. Residues C280 and C283 each coordinate Zn(2+).

The protein belongs to the arsA ATPase family. In terms of assembly, homodimer.

The protein localises to the cytoplasm. The protein resides in the endoplasmic reticulum. Functionally, ATPase required for the post-translational delivery of tail-anchored (TA) proteins to the endoplasmic reticulum. Recognizes and selectively binds the transmembrane domain of TA proteins in the cytosol. This complex then targets to the endoplasmic reticulum by membrane-bound receptors, where the tail-anchored protein is released for insertion. This process is regulated by ATP binding and hydrolysis. ATP binding drives the homodimer towards the closed dimer state, facilitating recognition of newly synthesized TA membrane proteins. ATP hydrolysis is required for insertion. Subsequently, the homodimer reverts towards the open dimer state, lowering its affinity for the membrane-bound receptor, and returning it to the cytosol to initiate a new round of targeting. The chain is ATPase GET3 from Uncinocarpus reesii (strain UAMH 1704).